Here is a 946-residue protein sequence, read N- to C-terminus: Inter-alpha-trypsin inhibitor heavy chain H2 (946 aa).

A signal peptide spans 1–18 (MKRLTCFFICFFLSEVSG). The propeptide occupies 19-54 (FEIPINGLSEFVDYEDLVELAPGKFQLVAENRRYQR). The VIT domain occupies 56-185 (LPGESEEMME…KVQFELHYQE (130 aa)). Ser60 carries the post-translational modification Phosphoserine; by FAM20C. A glycan (N-linked (GlcNAc...) (complex) asparagine) is linked at Asn118. A disulfide bridge connects residues Cys261 and Cys264. Glu282 and Glu283 each carry 4-carboxyglutamate. Positions 308–468 (PKNILFVIDV…YDFLKRLSNE (161 aa)) constitute a VWFA domain. N-linked (GlcNAc...) asparagine glycosylation occurs at Asn445. Ser466 bears the Phosphoserine; by FAM20C mark. Residues Cys650 and Cys651 are joined by a disulfide bond. The O-glycosylated at three sites stretch occupies residues 665–679 (STPSWANPSPTPVIS). A glycan (O-linked (GalNAc...) threonine; partial) is linked at Thr666. Ser673 is a glycosylation site (O-linked (GalNAc...) serine). O-linked (GalNAc...) threonine glycans are attached at residues Thr675 and Thr691. Residue Asp702 is modified to Aspartate 1-(chondroitin 4-sulfate)-ester. A propeptide spanning residues 703–946 (PHFIIYLPKS…PQLYSFLKRP (244 aa)) is cleaved from the precursor. Ser886 is subject to Phosphoserine; by FAM20C.

As to quaternary structure, I-alpha-I plasma protease inhibitors are assembled from one or two heavy chains (HC) and one light chain, bikunin. Inter-alpha-inhibitor (I-alpha-I) is composed of ITIH1/HC1, ITIH2/HC2 and bikunin. In terms of processing, heavy chains are linked to bikunin via chondroitin 4-sulfate esterified to the alpha-carboxyl of the C-terminal aspartate after propeptide cleavage. N- and O-glycosylated. O-glycosylated with core 1 or possibly core 8 glycans. Post-translationally, phosphorylated by FAM20C in the extracellular medium. Plasma.

The protein localises to the secreted. May act as a carrier of hyaluronan in serum or as a binding protein between hyaluronan and other matrix protein, including those on cell surfaces in tissues to regulate the localization, synthesis and degradation of hyaluronan which are essential to cells undergoing biological processes. This Homo sapiens (Human) protein is Inter-alpha-trypsin inhibitor heavy chain H2 (ITIH2).